The sequence spans 541 residues: Glucose-6-phosphate isomerase (541 aa).

The active-site Proton donor is the E346. Residues H377 and K506 contribute to the active site.

The protein belongs to the GPI family.

The protein localises to the cytoplasm. It carries out the reaction alpha-D-glucose 6-phosphate = beta-D-fructose 6-phosphate. It participates in carbohydrate biosynthesis; gluconeogenesis. The protein operates within carbohydrate degradation; glycolysis; D-glyceraldehyde 3-phosphate and glycerone phosphate from D-glucose: step 2/4. Functionally, catalyzes the reversible isomerization of glucose-6-phosphate to fructose-6-phosphate. This is Glucose-6-phosphate isomerase from Rhizobium johnstonii (strain DSM 114642 / LMG 32736 / 3841) (Rhizobium leguminosarum bv. viciae).